Here is a 514-residue protein sequence, read N- to C-terminus: MNEEQRKASSVDVLAERDKKAEKDYSKYFEHVYQPPNLKEAKKRGKQEVRYNRDFQIDEKYRGMGNERTFLIKTYGCQMNAHDTEVIAGILEALGYQATTDINTADVILINTCAIRENAENKVFSEIGNLKHLKKERPDILIGVCGCMSQEESVVNKILKSYQNVDMIFGTHNIHHLPEILEEAYLSKAMVVEVWSKEGDVIENLPKVREGNIKAWVNIMYGCDKFCTYCIVPFTRGKERSRRPEDIIDEVRELAREGYKEITLLGQNVNSYGKDLQDIEYDLGDLLQAISKIAIPRVRFTTSHPWDFTDHMIDVISEGGNIVPHIHLPVQSGNNAVLKIMGRKYTRESYLDLVKRIKDRIPNVALTTDIIVGYPNESEEQFEETLTLYDEVGFEHAYTYLYSQRDGTPAAKMKDNVPLNVKKERLQRLNKKVGHYSQIAMSKYEGQTVTVLCEGSSKKDDQVLAGYTDKNKLVNFKAPKEMIGKLVEVRIDEAKQYSLNGSFVKEVEPEMVIQ.

Residues 1-21 are disordered; sequence MNEEQRKASSVDVLAERDKKA. An MTTase N-terminal domain is found at 68 to 186; that stretch reads RTFLIKTYGC…LPEILEEAYL (119 aa). Residues Cys-77, Cys-113, Cys-147, Cys-223, Cys-227, and Cys-230 each coordinate [4Fe-4S] cluster. Residues 209–440 form the Radical SAM core domain; sequence REGNIKAWVN…KKVGHYSQIA (232 aa). In terms of domain architecture, TRAM spans 442–505; that stretch reads SKYEGQTVTV…QYSLNGSFVK (64 aa).

The protein belongs to the methylthiotransferase family. MiaB subfamily. In terms of assembly, monomer. [4Fe-4S] cluster serves as cofactor.

Its subcellular location is the cytoplasm. The catalysed reaction is N(6)-dimethylallyladenosine(37) in tRNA + (sulfur carrier)-SH + AH2 + 2 S-adenosyl-L-methionine = 2-methylsulfanyl-N(6)-dimethylallyladenosine(37) in tRNA + (sulfur carrier)-H + 5'-deoxyadenosine + L-methionine + A + S-adenosyl-L-homocysteine + 2 H(+). Functionally, catalyzes the methylthiolation of N6-(dimethylallyl)adenosine (i(6)A), leading to the formation of 2-methylthio-N6-(dimethylallyl)adenosine (ms(2)i(6)A) at position 37 in tRNAs that read codons beginning with uridine. This is tRNA-2-methylthio-N(6)-dimethylallyladenosine synthase from Staphylococcus aureus (strain N315).